The following is a 427-amino-acid chain: Serine hydroxymethyltransferase (427 aa).

(6S)-5,6,7,8-tetrahydrofolate is bound by residues Leu124 and 128 to 130; that span reads GHL. An N6-(pyridoxal phosphate)lysine modification is found at Lys233.

Belongs to the SHMT family. Homodimer. Pyridoxal 5'-phosphate is required as a cofactor.

It is found in the cytoplasm. The enzyme catalyses (6R)-5,10-methylene-5,6,7,8-tetrahydrofolate + glycine + H2O = (6S)-5,6,7,8-tetrahydrofolate + L-serine. It functions in the pathway one-carbon metabolism; tetrahydrofolate interconversion. Its pathway is amino-acid biosynthesis; glycine biosynthesis; glycine from L-serine: step 1/1. Its function is as follows. Catalyzes the reversible interconversion of serine and glycine with tetrahydrofolate (THF) serving as the one-carbon carrier. This reaction serves as the major source of one-carbon groups required for the biosynthesis of purines, thymidylate, methionine, and other important biomolecules. Also exhibits THF-independent aldolase activity toward beta-hydroxyamino acids, producing glycine and aldehydes, via a retro-aldol mechanism. This is Serine hydroxymethyltransferase from Paracoccus denitrificans (strain Pd 1222).